Here is a 360-residue protein sequence, read N- to C-terminus: Phospho-N-acetylmuramoyl-pentapeptide-transferase (360 aa).

10 helical membrane-spanning segments follow: residues 26 to 46 (AIMS…RLIA), 70 to 90 (GTPT…ALLW), 94 to 114 (SNPY…VGFV), 132 to 152 (WKYF…YMHG), 168 to 188 (VMPQ…VGTS), 199 to 219 (GLAI…AWAT), 239 to 259 (LVVL…FNTY), 263 to 283 (VFMG…IAVL), 288 to 308 (LLLV…ILQV), and 338 to 358 (VIVR…ATLK).

Belongs to the glycosyltransferase 4 family. MraY subfamily. The cofactor is Mg(2+).

The protein resides in the cell inner membrane. The enzyme catalyses UDP-N-acetyl-alpha-D-muramoyl-L-alanyl-gamma-D-glutamyl-meso-2,6-diaminopimeloyl-D-alanyl-D-alanine + di-trans,octa-cis-undecaprenyl phosphate = di-trans,octa-cis-undecaprenyl diphospho-N-acetyl-alpha-D-muramoyl-L-alanyl-D-glutamyl-meso-2,6-diaminopimeloyl-D-alanyl-D-alanine + UMP. Its pathway is cell wall biogenesis; peptidoglycan biosynthesis. In terms of biological role, catalyzes the initial step of the lipid cycle reactions in the biosynthesis of the cell wall peptidoglycan: transfers peptidoglycan precursor phospho-MurNAc-pentapeptide from UDP-MurNAc-pentapeptide onto the lipid carrier undecaprenyl phosphate, yielding undecaprenyl-pyrophosphoryl-MurNAc-pentapeptide, known as lipid I. The chain is Phospho-N-acetylmuramoyl-pentapeptide-transferase from Photobacterium profundum (strain SS9).